Here is a 171-residue protein sequence, read N- to C-terminus: Peptide methionine sulfoxide reductase MsrA (171 aa).

Residue Cys-13 is part of the active site.

It belongs to the MsrA Met sulfoxide reductase family.

The catalysed reaction is L-methionyl-[protein] + [thioredoxin]-disulfide + H2O = L-methionyl-(S)-S-oxide-[protein] + [thioredoxin]-dithiol. The enzyme catalyses [thioredoxin]-disulfide + L-methionine + H2O = L-methionine (S)-S-oxide + [thioredoxin]-dithiol. Functionally, has an important function as a repair enzyme for proteins that have been inactivated by oxidation. Catalyzes the reversible oxidation-reduction of methionine sulfoxide in proteins to methionine. This is Peptide methionine sulfoxide reductase MsrA from Mycobacterium sp. (strain JLS).